Reading from the N-terminus, the 324-residue chain is Protoheme IX farnesyltransferase (324 aa).

A run of 9 helical transmembrane segments spans residues 31-51 (LIVL…RGEV), 53-73 (PVLA…ANTI), 104-124 (LVFA…CANL), 125-145 (LSAC…THWL), 153-173 (IVIG…AVTG), 181-201 (VLFA…AMLI), 222-242 (TAWQ…LLVY), 243-263 (PLHA…VVFI), and 285-305 (FSIL…LPLT).

It belongs to the UbiA prenyltransferase family. Protoheme IX farnesyltransferase subfamily.

The protein localises to the cell inner membrane. It catalyses the reaction heme b + (2E,6E)-farnesyl diphosphate + H2O = Fe(II)-heme o + diphosphate. It participates in porphyrin-containing compound metabolism; heme O biosynthesis; heme O from protoheme: step 1/1. Its function is as follows. Converts heme B (protoheme IX) to heme O by substitution of the vinyl group on carbon 2 of heme B porphyrin ring with a hydroxyethyl farnesyl side group. The protein is Protoheme IX farnesyltransferase of Cyanothece sp. (strain PCC 7425 / ATCC 29141).